A 106-amino-acid polypeptide reads, in one-letter code: UPF0145 protein BH0643 (106 aa).

This sequence belongs to the UPF0145 family.

This is UPF0145 protein BH0643 from Halalkalibacterium halodurans (strain ATCC BAA-125 / DSM 18197 / FERM 7344 / JCM 9153 / C-125) (Bacillus halodurans).